The sequence spans 424 residues: uncharacterized protein (424 aa).

Transmembrane regions (helical) follow at residues 9–29, 41–61, 86–106, 119–139, 148–168, 184–204, 222–242, 270–290, 320–340, 345–365, and 377–397; these read ITWI…GILI, ASLF…GTLA, GAIL…IIAL, ADWQ…LLHM, ISTL…AVSL, WSAA…WEMI, LFLA…VTVG, VTVC…IAGF, VLTA…LFQI, LLKG…AAAL, and MALG…WALL.

It belongs to the amino acid-polyamine-organocation (APC) superfamily.

Its subcellular location is the cell membrane. This is an uncharacterized protein from Bacillus subtilis (strain 168).